Consider the following 289-residue polypeptide: Acetyl-coenzyme A carboxylase carboxyl transferase subunit beta (289 aa).

The CoA carboxyltransferase N-terminal domain maps to I30–K289. Residues C34, C37, C52, and C55 each coordinate Zn(2+). The C4-type zinc-finger motif lies at C34–C55.

The protein belongs to the AccD/PCCB family. Acetyl-CoA carboxylase is a heterohexamer composed of biotin carboxyl carrier protein (AccB), biotin carboxylase (AccC) and two subunits each of ACCase subunit alpha (AccA) and ACCase subunit beta (AccD). It depends on Zn(2+) as a cofactor.

Its subcellular location is the cytoplasm. It catalyses the reaction N(6)-carboxybiotinyl-L-lysyl-[protein] + acetyl-CoA = N(6)-biotinyl-L-lysyl-[protein] + malonyl-CoA. It participates in lipid metabolism; malonyl-CoA biosynthesis; malonyl-CoA from acetyl-CoA: step 1/1. Its function is as follows. Component of the acetyl coenzyme A carboxylase (ACC) complex. Biotin carboxylase (BC) catalyzes the carboxylation of biotin on its carrier protein (BCCP) and then the CO(2) group is transferred by the transcarboxylase to acetyl-CoA to form malonyl-CoA. The sequence is that of Acetyl-coenzyme A carboxylase carboxyl transferase subunit beta from Oenococcus oeni (strain ATCC BAA-331 / PSU-1).